We begin with the raw amino-acid sequence, 418 residues long: Tyrosine--tRNA ligase 1 (418 aa).

Residue Tyr-34 participates in L-tyrosine binding. Residues 39 to 48 (PTADSLHIGH) carry the 'HIGH' region motif. Positions 169 and 173 each coordinate L-tyrosine. A 'KMSKS' region motif is present at residues 230 to 234 (KFGKT). Residue Lys-233 participates in ATP binding. Residues 352-418 (TVLIDLLVES…GKKKYFLIRY (67 aa)) form the S4 RNA-binding domain.

It belongs to the class-I aminoacyl-tRNA synthetase family. TyrS type 1 subfamily. In terms of assembly, homodimer.

Its subcellular location is the cytoplasm. The catalysed reaction is tRNA(Tyr) + L-tyrosine + ATP = L-tyrosyl-tRNA(Tyr) + AMP + diphosphate + H(+). Catalyzes the attachment of tyrosine to tRNA(Tyr) in a two-step reaction: tyrosine is first activated by ATP to form Tyr-AMP and then transferred to the acceptor end of tRNA(Tyr). This Bacillus anthracis protein is Tyrosine--tRNA ligase 1.